The primary structure comprises 176 residues: Variant surface antigen A (176 aa).

The first 29 residues, Met1–Ser29, serve as a signal peptide directing secretion. Cys30 carries N-palmitoyl cysteine lipidation. Cys30 is lipidated: S-diacylglycerol cysteine. The tract at residues Thr33–Ser176 is disordered. The span at Asn35–Ser121 shows a compositional bias: low complexity. Repeat 1 spans residues Lys123–Thr135. The interval Lys123–Ser176 is 2.5 X 13 AA repeats. Polar residues predominate over residues Asn126 to Thr142. The segment covering Ser143–Ser153 has biased composition (low complexity). Residues Lys155–Thr167 form repeat 2. The segment covering Asn158–Ser176 has biased composition (polar residues). The stretch at Lys168–Ser176 is one 3; truncated repeat.

The protein resides in the cell membrane. Its function is as follows. Responsible for the antigenic diversity for host adaptation. This is Variant surface antigen A (vlpA) from Mesomycoplasma hyorhinis (Mycoplasma hyorhinis).